The sequence spans 338 residues: Fructose-1,6-bisphosphatase class 1 (338 aa).

Residues glutamate 92, aspartate 114, leucine 116, and aspartate 117 each contribute to the Mg(2+) site. Substrate-binding positions include 117–120 and asparagine 210; that span reads DGSS. Position 284 (glutamate 284) interacts with Mg(2+).

This sequence belongs to the FBPase class 1 family. Homotetramer. The cofactor is Mg(2+).

Its subcellular location is the cytoplasm. The catalysed reaction is beta-D-fructose 1,6-bisphosphate + H2O = beta-D-fructose 6-phosphate + phosphate. Its pathway is carbohydrate biosynthesis; gluconeogenesis. This is Fructose-1,6-bisphosphatase class 1 from Halorhodospira halophila (strain DSM 244 / SL1) (Ectothiorhodospira halophila (strain DSM 244 / SL1)).